A 191-amino-acid polypeptide reads, in one-letter code: Cell division protein SepF (191 aa).

A compositionally biased stretch (polar residues) spans 157–178 (YLNESPAQPVQTTTSFGRTATP). The segment at 157–191 (YLNESPAQPVQTTTSFGRTATPTPAWGTDSRYAAQ) is disordered.

The protein belongs to the SepF family. As to quaternary structure, homodimer. Interacts with FtsZ.

The protein resides in the cytoplasm. Cell division protein that is part of the divisome complex and is recruited early to the Z-ring. Probably stimulates Z-ring formation, perhaps through the cross-linking of FtsZ protofilaments. Its function overlaps with FtsA. The protein is Cell division protein SepF of Synechococcus elongatus (strain ATCC 33912 / PCC 7942 / FACHB-805) (Anacystis nidulans R2).